Reading from the N-terminus, the 155-residue chain is Ribosome maturation factor RimP (155 aa).

The protein belongs to the RimP family.

It localises to the cytoplasm. Its function is as follows. Required for maturation of 30S ribosomal subunits. The protein is Ribosome maturation factor RimP of Staphylococcus aureus (strain bovine RF122 / ET3-1).